The following is a 245-amino-acid chain: Small ribosomal subunit protein uS2 (245 aa).

This sequence belongs to the universal ribosomal protein uS2 family.

This chain is Small ribosomal subunit protein uS2, found in Pseudomonas fluorescens (strain SBW25).